The sequence spans 742 residues: 5-methyltetrahydropteroyltriglutamate--homocysteine methyltransferase (742 aa).

5-methyltetrahydropteroyltri-L-glutamate-binding positions include R18–K21 and K112. Residues I420–S422 and E473 contribute to the L-homocysteine site. L-methionine-binding positions include I420–S422 and E473. 5-methyltetrahydropteroyltri-L-glutamate is bound at residue W550. D588 is an L-homocysteine binding site. D588 lines the L-methionine pocket. A 5-methyltetrahydropteroyltri-L-glutamate-binding site is contributed by E594. 3 residues coordinate Zn(2+): H630, C632, and E654. The Proton donor role is filled by H683. C715 is a binding site for Zn(2+).

This sequence belongs to the vitamin-B12 independent methionine synthase family. Zn(2+) is required as a cofactor.

It catalyses the reaction 5-methyltetrahydropteroyltri-L-glutamate + L-homocysteine = tetrahydropteroyltri-L-glutamate + L-methionine. Its pathway is amino-acid biosynthesis; L-methionine biosynthesis via de novo pathway; L-methionine from L-homocysteine (MetE route): step 1/1. Catalyzes the transfer of a methyl group from 5-methyltetrahydrofolate to homocysteine resulting in methionine formation. This is 5-methyltetrahydropteroyltriglutamate--homocysteine methyltransferase from Staphylococcus aureus (strain MRSA252).